A 638-amino-acid chain; its full sequence is 1-deoxy-D-xylulose-5-phosphate synthase (638 aa).

Thiamine diphosphate is bound by residues His77 and Ala118–Ala120. Asp149 lines the Mg(2+) pocket. Residues Gly150–Ser151, Asn178, Tyr287, and Glu369 each bind thiamine diphosphate. Residue Asn178 participates in Mg(2+) binding.

Belongs to the transketolase family. DXPS subfamily. In terms of assembly, homodimer. It depends on Mg(2+) as a cofactor. The cofactor is thiamine diphosphate.

The enzyme catalyses D-glyceraldehyde 3-phosphate + pyruvate + H(+) = 1-deoxy-D-xylulose 5-phosphate + CO2. It functions in the pathway metabolic intermediate biosynthesis; 1-deoxy-D-xylulose 5-phosphate biosynthesis; 1-deoxy-D-xylulose 5-phosphate from D-glyceraldehyde 3-phosphate and pyruvate: step 1/1. Functionally, catalyzes the acyloin condensation reaction between C atoms 2 and 3 of pyruvate and glyceraldehyde 3-phosphate to yield 1-deoxy-D-xylulose-5-phosphate (DXP). This Phenylobacterium zucineum (strain HLK1) protein is 1-deoxy-D-xylulose-5-phosphate synthase.